The chain runs to 61 residues: Alpha-conotoxin-like Sm1.1 (61 aa).

The signal sequence occupies residues 1–16 (MFTVFLLVVLATTVVS). Residues 17–43 (FPSDRASDGRDDEAKDERSDMHESGRK) constitute a propeptide that is removed on maturation. A disordered region spans residues 19–46 (SDRASDGRDDEAKDERSDMHESGRKGRG). The segment covering 21-42 (RASDGRDDEAKDERSDMHESGR) has biased composition (basic and acidic residues). 2 disulfides stabilise this stretch: cysteine 48-cysteine 53 and cysteine 49-cysteine 59. Proline 55 is modified (4-hydroxyproline; partial). A Cysteine amide modification is found at cysteine 59.

The protein belongs to the conotoxin A superfamily. In terms of tissue distribution, expressed by the venom duct.

The protein resides in the secreted. In terms of biological role, alpha-conotoxins act on postsynaptic membranes, they bind to the nicotinic acetylcholine receptors (nAChR) and thus inhibit them. This is Alpha-conotoxin-like Sm1.1 from Conus stercusmuscarum (Fly-specked cone).